We begin with the raw amino-acid sequence, 509 residues long: Sorting nexin MVP1 (509 aa).

Polar residues predominate over residues 1-25 (MDTYSGQNGWADTSNASPWGDTNDT). Residues 1–28 (MDTYSGQNGWADTSNASPWGDTNDTMPI) are disordered. The region spanning 126–245 (QLDIISIEEI…TFLTVPTDLT (120 aa)) is the PX domain. Residues Arg170, Ser172, Lys196, and Arg211 each contribute to the a 1,2-diacyl-sn-glycero-3-phospho-(1D-myo-inositol-3-phosphate) site.

It belongs to the sorting nexin family.

It localises to the cytoplasm. The protein localises to the membrane. Its function is as follows. Required for vacuolar protein sorting. The polypeptide is Sorting nexin MVP1 (MVP1) (Candida glabrata (strain ATCC 2001 / BCRC 20586 / JCM 3761 / NBRC 0622 / NRRL Y-65 / CBS 138) (Yeast)).